Here is a 109-residue protein sequence, read N- to C-terminus: uncharacterized protein (109 aa).

The next 3 membrane-spanning stretches (helical) occupy residues 16-36 (HPHL…EIYF), 52-72 (LIVL…LIAL), and 87-107 (ILLC…AYPV).

It localises to the cell membrane. This is an uncharacterized protein from Salmonella typhimurium (strain LT2 / SGSC1412 / ATCC 700720).